The chain runs to 395 residues: Neuromedin-U receptor 2 (395 aa).

At 1–41 (MGKLENASWIHDPLMKYLNSTEEYLAHLCGPKRSDLSLPVS) the chain is on the extracellular side. 2 N-linked (GlcNAc...) asparagine glycosylation sites follow: Asn-6 and Asn-19. The helical transmembrane segment at 42-62 (VAYALIFLVGVMGNLLVCMVI) threads the bilayer. Residues 63 to 74 (VRHQTLKTPTNY) lie on the Cytoplasmic side of the membrane. The helical transmembrane segment at 75–95 (YLFSLAVSDLLVLLLGMPLEI) threads the bilayer. Residues 96 to 115 (YEMWHNYPFLFGPVGCYFKT) are Extracellular-facing. The cysteines at positions 111 and 196 are disulfide-linked. Residues 116-138 (ALFETVCFASILSVTTVSVERYV) form a helical membrane-spanning segment. The Cytoplasmic segment spans residues 139 to 157 (AIVHPFRAKLESTRRRALR). The helical transmembrane segment at 158 to 178 (ILSLVWSFSVVFSLPNTSIHG) threads the bilayer. Over 179-212 (IKFQHFPNGSSVPGSATCTVTKPMWVYNLIIQAT) the chain is Extracellular. Asn-186 carries N-linked (GlcNAc...) asparagine glycosylation. The chain crosses the membrane as a helical span at residues 213–233 (SFLFYILPMTLISVLYYLMGL). Topologically, residues 234-257 (RLKRDESLEANKVAVNIHRPSRKS) are cytoplasmic. A helical membrane pass occupies residues 258–278 (VTKMLFVLVLVFAICWTPFHV). Residues 279–293 (DRLFFSFVEEWTESL) are Extracellular-facing. A helical transmembrane segment spans residues 294–314 (AAVFNLIHVVSGVFFYLSSAV). Over 315-395 (NPIIYNLLSR…TTAPCAGEVP (81 aa)) the chain is Cytoplasmic. The interval 374–395 (FPGQSSIHNTNLTTAPCAGEVP) is disordered. Positions 375 to 387 (PGQSSIHNTNLTT) are enriched in polar residues.

The protein belongs to the G-protein coupled receptor 1 family. In terms of tissue distribution, the highest level is detected in the uterus. In the central nervous system, high expression levels were found in the hypothalamus and moderate levels in both the medulla oblongata and spinal cord. Expressed in the hypothalamic paraventricular nucleus (PVN) and suprachiasmatic nuclei (SCN) of the hypothalamus. Expression is low in the gastrointestinal tract. In other peripheral tissues, moderate expression was observed in the lung and ovary.

Its subcellular location is the cell membrane. In terms of biological role, receptor for the neuromedin-U and neuromedin-S neuropeptides. This is Neuromedin-U receptor 2 (Nmur2) from Rattus norvegicus (Rat).